The chain runs to 431 residues: Serine hydroxymethyltransferase 3 (431 aa).

(6S)-5,6,7,8-tetrahydrofolate is bound by residues Leu131 and 135 to 137 (GHL). Residue Lys240 is modified to N6-(pyridoxal phosphate)lysine.

It belongs to the SHMT family. As to quaternary structure, homodimer. Pyridoxal 5'-phosphate serves as cofactor.

The protein resides in the cytoplasm. It carries out the reaction (6R)-5,10-methylene-5,6,7,8-tetrahydrofolate + glycine + H2O = (6S)-5,6,7,8-tetrahydrofolate + L-serine. The protein operates within one-carbon metabolism; tetrahydrofolate interconversion. It functions in the pathway amino-acid biosynthesis; glycine biosynthesis; glycine from L-serine: step 1/1. In terms of biological role, catalyzes the reversible interconversion of serine and glycine with tetrahydrofolate (THF) serving as the one-carbon carrier. This reaction serves as the major source of one-carbon groups required for the biosynthesis of purines, thymidylate, methionine, and other important biomolecules. Also exhibits THF-independent aldolase activity toward beta-hydroxyamino acids, producing glycine and aldehydes, via a retro-aldol mechanism. The protein is Serine hydroxymethyltransferase 3 of Colwellia psychrerythraea (strain 34H / ATCC BAA-681) (Vibrio psychroerythus).